The sequence spans 110 residues: uncharacterized protein (110 aa).

2 disordered regions span residues 1-41 (MEWG…ERAQ) and 65-110 (LRQL…ASES). The stretch at 38-68 (ERAQQLLDAVEQRQRQLLDTIAACEEMLRQL) forms a coiled coil.

This is an uncharacterized protein from Mus musculus (Mouse).